The following is a 227-amino-acid chain: Large ribosomal subunit protein uL10c (227 aa).

A chloroplast-targeting transit peptide spans 1–47; that stretch reads MEATFFTLPSSTSHSYPFSLKSHFNNSLTLPTHPHFKPKSKNLTIRS.

Belongs to the universal ribosomal protein uL10 family. In terms of assembly, part of the 50S ribosomal subunit.

It is found in the plastid. Its subcellular location is the chloroplast. Its function is as follows. This protein binds directly to 23S ribosomal RNA. This is Large ribosomal subunit protein uL10c (RPL10) from Nicotiana tabacum (Common tobacco).